The sequence spans 221 residues: Iron-sulfur cluster repair protein YtfE (221 aa).

The protein belongs to the RIC family. YtfE subfamily. In terms of assembly, homodimer.

It is found in the cytoplasm. In terms of biological role, di-iron-containing protein involved in the repair of iron-sulfur clusters damaged by oxidative and nitrosative stress conditions. The sequence is that of Iron-sulfur cluster repair protein YtfE from Yersinia pseudotuberculosis serotype O:1b (strain IP 31758).